The sequence spans 467 residues: Probable citrate synthase 1, mitochondrial (467 aa).

Residues His-303, His-349, and Asp-404 contribute to the active site.

Belongs to the citrate synthase family. Homodimer.

It localises to the mitochondrion matrix. It carries out the reaction oxaloacetate + acetyl-CoA + H2O = citrate + CoA + H(+). Its pathway is carbohydrate metabolism; tricarboxylic acid cycle; isocitrate from oxaloacetate: step 1/2. The protein is Probable citrate synthase 1, mitochondrial of Aedes aegypti (Yellowfever mosquito).